The following is a 204-amino-acid chain: Potassium-transporting ATPase KdpC subunit (204 aa).

Residues 21–41 form a helical membrane-spanning segment; the sequence is AALVIFVGLSLVTGVLYPVVV.

This sequence belongs to the KdpC family. The system is composed of three essential subunits: KdpA, KdpB and KdpC.

It is found in the cell inner membrane. Part of the high-affinity ATP-driven potassium transport (or Kdp) system, which catalyzes the hydrolysis of ATP coupled with the electrogenic transport of potassium into the cytoplasm. This subunit acts as a catalytic chaperone that increases the ATP-binding affinity of the ATP-hydrolyzing subunit KdpB by the formation of a transient KdpB/KdpC/ATP ternary complex. The polypeptide is Potassium-transporting ATPase KdpC subunit (Ralstonia nicotianae (strain ATCC BAA-1114 / GMI1000) (Ralstonia solanacearum)).